A 344-amino-acid polypeptide reads, in one-letter code: Sesquiterpene synthase 9 (344 aa).

The Mg(2+) site is built by Asp-88, Asn-224, Ser-228, and Glu-232. Residues 88–92 (DEYSD) carry the DDXXD motif motif. An NSE/DTE motif motif is present at residues 224-232 (NDMLSWNVE). Positions 313 and 314 each coordinate (2E,6E)-farnesyl diphosphate.

The protein belongs to the terpene synthase family. It depends on Mg(2+) as a cofactor.

Terpene cyclase that catalyzes the cyclization of farnesyl diphosphate (FPP) to a single major sesquiterpene scaffold whose chemical structure is still unknown. This Postia placenta (strain ATCC 44394 / Madison 698-R) (Brown rot fungus) protein is Sesquiterpene synthase 9.